The chain runs to 46 residues: Protein PsbN (46 aa).

Residues 10 to 30 form a helical membrane-spanning segment; the sequence is LIITILAVTIAFTAVSLYTAF.

This sequence belongs to the PsbN family.

The protein localises to the cellular thylakoid membrane. May play a role in photosystem I and II biogenesis. This is Protein PsbN from Acaryochloris marina (strain MBIC 11017).